We begin with the raw amino-acid sequence, 68 residues long: Large ribosomal subunit protein uL29 (68 aa).

Belongs to the universal ribosomal protein uL29 family.

This chain is Large ribosomal subunit protein uL29, found in Rhodopseudomonas palustris (strain BisB18).